The primary structure comprises 1038 residues: MDPNTIIEALRGTMDPALREAAERQLNEAHKSLNFVSTLLQITMSEQLDLPVRQAGVIYLKNMITQYWPDREATPGDIAPYTIPEEDRHCIRENIVEAIIHSPELIRVQLTTCIHHIIKHDYPSRWTAIVDKIGFYLQSDNSACWLGILLCLYQLVKNYEYKKPEERSPLVAAMQHFLPVLKDRFIQLLSDQSDQSVLIQKQIFKIFYALVQYTLPLELINQQNLTEWVEILKTVVNRDVPNETLQVEEDDRPELPWWKCKKWALHILARLFERYGSPGNVSKEYNEFAEVFLKAFAVGVQQVLLKVLYQYKEKQYMAPRVLQQTLNYINQGVSHALTWKNLKPHIQGIIQDVIFPLMCYTDADEELWQEDPYEYIRMKFDVFEDFISPTTAAQTLLFTACSKRKEVLQKTMGFCYQILTEPNADPRKKDGALHMIGSLAEILLKKKIYKDQMEYMLQNHVFPLFSSELGYMRARACWVLHYFCEVKFKSDQNLQTALELTRRCLIDDREMPVKVEAAIALQVLISNQEKAKEYITPFIRPVMQALLHIIRETENDDLTNVIQKMICEYSEEVTPIAVEMTQHLAMTFNQVIQTGPDEEGSDDKAVTAMGILNTIDTLLSVVEDHKEITQQLEGICLQVIGTVLQQHVLEFYEEIFSLAHSLTCQQVSPQMWQLLPLVFEVFQQDGFDYFTDMMPLLHNYVTVDTDTLLSDTKYLEMIYSMCKKVLTGVAGEDAECHAAKLLEVIILQCKGRGIDQCIPLFVEAALERLTREVKTSELRTMCLQVAIAALYYNPHLLLNTLENLRFPNNVEPVTNHFITQWLNDVDCFLGLHDRKMCVLGLCALIDMEQIPQVLNQVSGQILPAFILLFNGLKRAYACHAEHENDSDDDEDAEDDDETEELGSDEDDIDEDGQEYLEILAKQAGEDGDDEDWEEDDAEETALEGYSTIIDDEDNPVDEYQIFKAIFQTIQNRNPVWYQALTHGLNEEQRKQLQDIATLADQRRAAHESKMIEKHGGYKFSAPVVPSSFNFGGPAPGMN.

N-acetylmethionine is present on Met-1. The region spanning 22–101 (AERQLNEAHK…RENIVEAIIH (80 aa)) is the Importin N-terminal domain. The interval 881–910 (EHENDSDDDEDAEDDDETEELGSDEDDIDE) is disordered. The segment covering 884–910 (NDSDDDEDAEDDDETEELGSDEDDIDE) has biased composition (acidic residues). Phosphoserine is present on Ser-886. Thr-898 is subject to Phosphothreonine. Residues Ser-903 and Ser-1020 each carry the phosphoserine modification.

This sequence belongs to the importin beta family. Forms a heterodimer with KPNB1. Interacts with histone H1. Interacts with H2A, H2B, H3 and H4 histones. Interacts with SNUPN and XPO1. Interacts with RPS7 and RPL5. Interacts with RPL23A (via BIB domain). Binds directly to nuclear pore complexes. Interacts with SMAD4 and NUP93; translocates SMAD4 to the nucleus through the NPC upon BMP7 stimulation resulting in activation of SMAD4 signaling. Interacts with phosphorylated SMAD2; the interaction facilitates translocation of SMAD2 to the nucleus. Interacts with SRP19. Interacts with RUNX2; the interaction inhibits RUNX2 nuclear translocation in osteoblasts. Interacts with HDAC6, DLX3 and KLF4; the interaction facilitates HDAC6, DLX3 and KLF4 nuclear translocation in dental papilla cells.

Its subcellular location is the cytoplasm. The protein resides in the nucleus. Functionally, functions in nuclear protein import, either by acting as autonomous nuclear transport receptor or as an adapter-like protein in association with the importin-beta subunit KPNB1. Acting autonomously is thought to serve itself as receptor for nuclear localization signals (NLS) and to promote translocation of import substrates through the nuclear pore complex (NPC) by an energy requiring, Ran-dependent mechanism. At the nucleoplasmic side of the NPC, Ran binds to importin, the importin/substrate complex dissociates and importin is re-exported from the nucleus to the cytoplasm where GTP hydrolysis releases Ran. Mediates autonomously the nuclear import of ribosomal proteins RPL23A, RPS7 and RPL5. In association with KPNB1 mediates the nuclear import of H1 histone and the Ran-binding site of IPO7 is not required but synergizes with that of KPNB1 in importin/substrate complex dissociation. Promotes odontoblast differentiation via promoting nuclear translocation of DLX3, KLF4, SMAD2, thereby facilitating the transcription of target genes that play a role in odontoblast differentiation. Facilitates BMP4-induced translocation of SMAD1 to the nucleus and recruitment to the MSX1 gene promoter, thereby promotes the expression of the odontogenic regulator MSX1 in dental mesenchymal cells. Also promotes odontoblast differentiation by facilitating the nuclear translocation of HDAC6 and subsequent repression of RUNX2 expression. Inhibits osteoblast differentiation by inhibiting nuclear translocation of RUNX2 and therefore inhibition of RUNX2 target gene transcription. In vitro, mediates nuclear import of H2A, H2B, H3 and H4 histones. This chain is Importin-7 (Ipo7), found in Mus musculus (Mouse).